A 111-amino-acid chain; its full sequence is Cornifelin homolog B (111 aa).

It belongs to the cornifelin family.

This is Cornifelin homolog B (cnfn-b) from Xenopus laevis (African clawed frog).